The sequence spans 493 residues: Cobyric acid synthase (493 aa).

A GATase cobBQ-type domain is found at 252-443; that stretch reads DLQITVVRLP…LHGLFDNGPW (192 aa). Catalysis depends on cysteine 333, which acts as the Nucleophile. Histidine 435 is an active-site residue.

The protein belongs to the CobB/CobQ family. CobQ subfamily.

It functions in the pathway cofactor biosynthesis; adenosylcobalamin biosynthesis. In terms of biological role, catalyzes amidations at positions B, D, E, and G on adenosylcobyrinic A,C-diamide. NH(2) groups are provided by glutamine, and one molecule of ATP is hydrogenolyzed for each amidation. This chain is Cobyric acid synthase, found in Nostoc sp. (strain PCC 7120 / SAG 25.82 / UTEX 2576).